Here is a 188-residue protein sequence, read N- to C-terminus: MSIKSDKWIRRMAEQHGMIEPFEPGQVREADGRKIVSYGTSSYGYDIRCADEFKIFTNINSTIVDPKNFDEKSFVDFKGDVCIIPPNSFALARTMEYFRIPRSVLTICLGKSTYARCGIIVNVTPFEPEWEGYVTLEFSNTTPLPAKIYAGEGCAQVLFFESDEICETSYADRGGKYQGQHGVTLPKT.

DCTP contacts are provided by residues 111–116 (KSTYAR), 135–137 (TLE), Gln156, Tyr170, and Gln180. Glu137 (proton donor/acceptor) is an active-site residue.

The protein belongs to the dCTP deaminase family. As to quaternary structure, homotrimer.

It carries out the reaction dCTP + H2O + H(+) = dUTP + NH4(+). It functions in the pathway pyrimidine metabolism; dUMP biosynthesis; dUMP from dCTP (dUTP route): step 1/2. Catalyzes the deamination of dCTP to dUTP. The sequence is that of dCTP deaminase from Cupriavidus taiwanensis (strain DSM 17343 / BCRC 17206 / CCUG 44338 / CIP 107171 / LMG 19424 / R1) (Ralstonia taiwanensis (strain LMG 19424)).